Consider the following 300-residue polypeptide: Probable alpha-L-glutamate ligase (300 aa).

The ATP-grasp domain occupies 104–287; that stretch reads LQLLARQGID…IAGRMIEYIE (184 aa). ATP is bound by residues lysine 141, 178–179, aspartate 187, and 211–213; these read EY and RSN. Residues aspartate 248, glutamate 260, and asparagine 262 each contribute to the Mg(2+) site. Positions 248, 260, and 262 each coordinate Mn(2+).

This sequence belongs to the RimK family. Mg(2+) serves as cofactor. The cofactor is Mn(2+).

The polypeptide is Probable alpha-L-glutamate ligase (Serratia proteamaculans (strain 568)).